The chain runs to 135 residues: Protein KRTCAP2 homolog (135 aa).

The next 4 membrane-spanning stretches (helical) occupy residues 1 to 21, 35 to 55, 69 to 89, and 93 to 113; these read MAVS…LLFA, PMAI…LTAI, TKLI…SGMV, and CITT…RISI.

The protein belongs to the KRTCAP2 family. In terms of assembly, component of the oligosaccharyltransferase (OST) complex.

The protein resides in the membrane. Functionally, subunit of the oligosaccharyl transferase (OST) complex that catalyzes the initial transfer of a defined glycan (Glc(3)Man(9)GlcNAc(2) in eukaryotes) from the lipid carrier dolichol-pyrophosphate to an asparagine residue within an Asn-X-Ser/Thr consensus motif in nascent polypeptide chains, the first step in protein N-glycosylation. N-glycosylation occurs cotranslationally and the complex associates with the Sec61 complex at the channel-forming translocon complex that mediates protein translocation across the endoplasmic reticulum (ER). All subunits are required for a maximal enzyme activity. The polypeptide is Protein KRTCAP2 homolog (Ixodes scapularis (Black-legged tick)).